Reading from the N-terminus, the 860-residue chain is Leucine--tRNA ligase (860 aa).

The 'HIGH' region signature appears at 42–52; it reads PYPSGRLHMGH. The 'KMSKS' region signature appears at 619-623; the sequence is KMSKS. Lys622 lines the ATP pocket.

Belongs to the class-I aminoacyl-tRNA synthetase family.

The protein localises to the cytoplasm. It carries out the reaction tRNA(Leu) + L-leucine + ATP = L-leucyl-tRNA(Leu) + AMP + diphosphate. The polypeptide is Leucine--tRNA ligase (Histophilus somni (strain 129Pt) (Haemophilus somnus)).